Reading from the N-terminus, the 159-residue chain is IQ domain-containing protein J (159 aa).

In terms of domain architecture, IQ spans 47–67 (ESKVKIIQRAWREYLQRQEPL). The segment at 63–88 (RQEPLGKRSPSPPSVSSEKLSSSVSM) is disordered. Residues 76–87 (SVSSEKLSSSVS) are compositionally biased toward low complexity.

In Homo sapiens (Human), this protein is IQ domain-containing protein J.